A 56-amino-acid polypeptide reads, in one-letter code: MGHQNIWYSHPRKYGQGSRSCRACSNRHGLIRKYGLNICRQCFREYANDIGFKKLD.

Zn(2+) contacts are provided by Cys-21, Cys-24, Cys-39, and Cys-42.

It belongs to the universal ribosomal protein uS14 family. In terms of assembly, component of the 40S small ribosomal subunit. It depends on Zn(2+) as a cofactor.

The protein resides in the cytoplasm. It is found in the cytosol. It localises to the rough endoplasmic reticulum. The chain is Small ribosomal subunit protein uS14 (RpS29) from Scarabaeus laticollis (Scarab dung beetle).